The sequence spans 282 residues: Transcription factor HES-1 (282 aa).

A disordered region spans residues 1–44; that stretch reads MPADIMEKNSSSPVAATPASVNTTPDKPKTASEHRKSSKPIMEK. The segment covering 10 to 21 has biased composition (low complexity); that stretch reads SSSPVAATPASV. The segment covering 26–35 has biased composition (basic and acidic residues); that stretch reads DKPKTASEHR. The bHLH domain occupies 34–91; sequence HRKSSKPIMEKRRRARINESLSQLKTLILDALKKDSSRHSKLEKADILEMTVKHLRNL. An Orange domain is found at 110–143; sequence YRAGFSECMNEVTRFLSTCEGVNTEVRTRLLGHL. Disordered regions lie at residues 158 to 204 and 256 to 282; these read QAHP…GSAP and TSVG…PWRN. Composition is skewed to pro residues over residues 164 to 174 and 182 to 202; these read QAPPPPPPSGP and FAPP…PPGS. Residues 264-275 are compositionally biased toward low complexity; sequence SPSSGSSLTSDS. Residues 277–280 carry the WRPW motif motif; the sequence is WRPW.

As to quaternary structure, interacts with SIRT1. Transcription repression requires formation of a complex with a corepressor protein of the Groucho/TLE family. Interacts (via WPRW motif) with TLE1, and more weakly with TLE2. Interacts with HES6. Interacts with an FA complex, composed of FANCA, FANCF, FANCG and FANCL, but not of FANCC, nor FANCE. As to expression, expressed at high levels in undifferentiated neural precursor cells, but the level of expression decreases as neural differentiation proceeds.

The protein localises to the nucleus. Functionally, transcriptional repressor of genes that require a bHLH protein for their transcription. May act as a negative regulator of myogenesis by inhibiting the functions of MYOD1 and ASH1. Binds DNA on N-box motifs: 5'-CACNAG-3' with high affinity and on E-box motifs: 5'-CANNTG-3' with low affinity. May play a role in a functional FA core complex response to DNA cross-link damage, being required for the stability and nuclear localization of FA core complex proteins, as well as for FANCD2 monoubiquitination in response to DNA damage. This chain is Transcription factor HES-1 (Hes1), found in Mus musculus (Mouse).